The sequence spans 428 residues: Cyclin-B1-1 (428 aa).

The protein belongs to the cyclin family. Cyclin AB subfamily. Interacts with FZR2/CCS52A1, FZR1/CCS52A2 and FZR3/CCS52B. In terms of tissue distribution, expressed in root tip, lateral root apex, shoot apex, leaf primordia, axillary buds, stamen and petal primordia, ovules and developing embryo.

It localises to the nucleus. The chain is Cyclin-B1-1 (CYCB1-1) from Arabidopsis thaliana (Mouse-ear cress).